The primary structure comprises 424 residues: Imidazolonepropionase (424 aa).

2 residues coordinate Fe(3+): His84 and His86. Zn(2+) is bound by residues His84 and His86. Residues Arg93, Tyr156, and His189 each coordinate 4-imidazolone-5-propanoate. Tyr156 provides a ligand contact to N-formimidoyl-L-glutamate. His254 provides a ligand contact to Fe(3+). His254 is a Zn(2+) binding site. 4-imidazolone-5-propanoate is bound at residue Glu257. Asp328 contacts Fe(3+). Residue Asp328 coordinates Zn(2+). 2 residues coordinate N-formimidoyl-L-glutamate: Asn330 and Gly332. A 4-imidazolone-5-propanoate-binding site is contributed by Ser333.

This sequence belongs to the metallo-dependent hydrolases superfamily. HutI family. Requires Zn(2+) as cofactor. The cofactor is Fe(3+).

The protein resides in the cytoplasm. The catalysed reaction is 4-imidazolone-5-propanoate + H2O = N-formimidoyl-L-glutamate. It participates in amino-acid degradation; L-histidine degradation into L-glutamate; N-formimidoyl-L-glutamate from L-histidine: step 3/3. Functionally, catalyzes the hydrolytic cleavage of the carbon-nitrogen bond in imidazolone-5-propanoate to yield N-formimidoyl-L-glutamate. It is the third step in the universal histidine degradation pathway. This is Imidazolonepropionase from Geobacillus sp. (strain WCH70).